The following is a 325-amino-acid chain: Succinylglutamate desuccinylase (325 aa).

The Zn(2+) site is built by His-51, Glu-54, and His-148. Glu-211 is an active-site residue.

The protein belongs to the AspA/AstE family. Succinylglutamate desuccinylase subfamily. Requires Zn(2+) as cofactor.

It catalyses the reaction N-succinyl-L-glutamate + H2O = L-glutamate + succinate. It functions in the pathway amino-acid degradation; L-arginine degradation via AST pathway; L-glutamate and succinate from L-arginine: step 5/5. Its function is as follows. Transforms N(2)-succinylglutamate into succinate and glutamate. The chain is Succinylglutamate desuccinylase from Photorhabdus laumondii subsp. laumondii (strain DSM 15139 / CIP 105565 / TT01) (Photorhabdus luminescens subsp. laumondii).